We begin with the raw amino-acid sequence, 346 residues long: 4-hydroxy-2-oxohexanoate aldolase (346 aa).

The region spanning 7 to 259 is the Pyruvate carboxyltransferase domain; the sequence is VRITDTSLRD…KTGIDFFDIA (253 aa). 15 to 16 contributes to the substrate binding site; that stretch reads RD. Asp16 contributes to the Mn(2+) binding site. His19 (proton acceptor) is an active-site residue. Substrate contacts are provided by Ser169 and His198. Mn(2+) contacts are provided by His198 and His200. Tyr289 provides a ligand contact to substrate.

Belongs to the 4-hydroxy-2-oxovalerate aldolase family. As to quaternary structure, homodimer. Forms a heterotetramer composed of two aldolase (HsaF) and two dehydrogenase (HsaG) subunits. Requires Mn(2+) as cofactor.

It catalyses the reaction (S)-4-hydroxy-2-oxohexanoate = propanal + pyruvate. The enzyme catalyses (S)-4-hydroxy-2-oxopentanoate = acetaldehyde + pyruvate. Functionally, involved in cholesterol degradation. Catalyzes the retro-aldol cleavage of 4-hydroxy-2-oxohexanoate (HOHA) to pyruvate and propanal. Can also catalyze the cleavage of 4-hydroxy-2-oxopentanoate (HOPA) to pyruvate and acetaldehyde. The aldehydes produced by this reaction are directly channeled to the dehydrogenase HsaG. The chain is 4-hydroxy-2-oxohexanoate aldolase from Mycobacterium bovis (strain ATCC BAA-935 / AF2122/97).